We begin with the raw amino-acid sequence, 390 residues long: NADH-quinone oxidoreductase subunit D (390 aa).

Belongs to the complex I 49 kDa subunit family. As to quaternary structure, NDH-1 is composed of 14 different subunits. Subunits NuoB, C, D, E, F, and G constitute the peripheral sector of the complex.

It is found in the cell membrane. The catalysed reaction is a quinone + NADH + 5 H(+)(in) = a quinol + NAD(+) + 4 H(+)(out). Functionally, NDH-1 shuttles electrons from NADH, via FMN and iron-sulfur (Fe-S) centers, to quinones in the respiratory chain. The immediate electron acceptor for the enzyme in this species is believed to be ubiquinone. Couples the redox reaction to proton translocation (for every two electrons transferred, four hydrogen ions are translocated across the cytoplasmic membrane), and thus conserves the redox energy in a proton gradient. This Wolbachia sp. subsp. Brugia malayi (strain TRS) protein is NADH-quinone oxidoreductase subunit D.